A 176-amino-acid chain; its full sequence is Cytochrome b (176 aa).

A run of 3 helical transmembrane segments spans residues 33-53, 77-98, and 113-133; these read FGSL…FLAM, WLLR…YLHV, and WNMG…GYVL. Heme b is bound by residues histidine 83 and histidine 97.

This sequence belongs to the cytochrome b family. As to quaternary structure, the cytochrome bc1 complex contains 11 subunits: 3 respiratory subunits (MT-CYB, CYC1 and UQCRFS1), 2 core proteins (UQCRC1 and UQCRC2) and 6 low-molecular weight proteins (UQCRH/QCR6, UQCRB/QCR7, UQCRQ/QCR8, UQCR10/QCR9, UQCR11/QCR10 and a cleavage product of UQCRFS1). This cytochrome bc1 complex then forms a dimer. The cofactor is heme b.

It localises to the mitochondrion inner membrane. Functionally, component of the ubiquinol-cytochrome c reductase complex (complex III or cytochrome b-c1 complex) that is part of the mitochondrial respiratory chain. The b-c1 complex mediates electron transfer from ubiquinol to cytochrome c. Contributes to the generation of a proton gradient across the mitochondrial membrane that is then used for ATP synthesis. The sequence is that of Cytochrome b (MT-CYB) from Tomopeas ravum (Blunt-eared bat).